The sequence spans 559 residues: CTP synthase (559 aa).

Positions 1 to 270 (MTKFVFVTGG…DGLICDKLRL (270 aa)) are amidoligase domain. S13 serves as a coordination point for CTP. S13 provides a ligand contact to UTP. ATP contacts are provided by residues 14-19 (SLGKGI) and D71. Mg(2+)-binding residues include D71 and E144. Residues 151–153 (DIE), 191–196 (KTKPTQ), and K227 contribute to the CTP site. Residues 191 to 196 (KTKPTQ) and K227 contribute to the UTP site. The Glutamine amidotransferase type-1 domain occupies 295-548 (TIAMVGKYVD…IKAAIDHQKS (254 aa)). G357 contributes to the L-glutamine binding site. The active-site Nucleophile; for glutamine hydrolysis is the C384. Residues 385–388 (LGMQ), E408, and R474 contribute to the L-glutamine site. Catalysis depends on residues H521 and E523.

Belongs to the CTP synthase family. Homotetramer.

The catalysed reaction is UTP + L-glutamine + ATP + H2O = CTP + L-glutamate + ADP + phosphate + 2 H(+). It catalyses the reaction L-glutamine + H2O = L-glutamate + NH4(+). The enzyme catalyses UTP + NH4(+) + ATP = CTP + ADP + phosphate + 2 H(+). The protein operates within pyrimidine metabolism; CTP biosynthesis via de novo pathway; CTP from UDP: step 2/2. With respect to regulation, allosterically activated by GTP, when glutamine is the substrate; GTP has no effect on the reaction when ammonia is the substrate. The allosteric effector GTP functions by stabilizing the protein conformation that binds the tetrahedral intermediate(s) formed during glutamine hydrolysis. Inhibited by the product CTP, via allosteric rather than competitive inhibition. Functionally, catalyzes the ATP-dependent amination of UTP to CTP with either L-glutamine or ammonia as the source of nitrogen. Regulates intracellular CTP levels through interactions with the four ribonucleotide triphosphates. This chain is CTP synthase, found in Paracidovorax citrulli (strain AAC00-1) (Acidovorax citrulli).